We begin with the raw amino-acid sequence, 381 residues long: Prostatic acid phosphatase (381 aa).

The N-terminal stretch at 1–31 is a signal peptide; that stretch reads MRAVPLPLSRTASLSLGFLLLLSLCLDPGQA. Arginine 42 is a substrate binding site. Histidine 43 functions as the Nucleophile in the catalytic mechanism. Arginine 46 contributes to the substrate binding site. Asparagine 93 carries N-linked (GlcNAc...) asparagine glycosylation. Arginine 110 contacts substrate. Disulfide bonds link cysteine 160–cysteine 371, cysteine 214–cysteine 312, and cysteine 346–cysteine 350. The N-linked (GlcNAc...) asparagine glycan is linked to asparagine 219. Histidine 288 serves as a coordination point for substrate. Aspartate 289 acts as the Proton donor in catalysis. The N-linked (GlcNAc...) asparagine glycan is linked to asparagine 332.

Belongs to the histidine acid phosphatase family. In terms of assembly, homodimer; dimer formation is required for phosphatase activity. As to expression, expressed in salivary gland, thymus and thyroid gland. In terms of tissue distribution, widely expressed in prostate lobes, brain, kidney, liver, lung, muscle, placenta, salivary gland, spleen, thyroid and thymus. Locates to Schwann cells and fibroblasts. Expressed in peptidergic and non-peptidergic nociceptive (pain-sensing) neurons. Preferentially expressed in non-peptidergic doral root ganglia neurons.

It is found in the secreted. The protein localises to the cell membrane. The protein resides in the lysosome membrane. The enzyme catalyses a phosphate monoester + H2O = an alcohol + phosphate. The catalysed reaction is a ribonucleoside 5'-phosphate + H2O = a ribonucleoside + phosphate. It carries out the reaction 1-(9Z-octadecenoyl)-sn-glycero-3-phosphate + H2O = 1-(9Z-octadecenoyl)-sn-glycerol + phosphate. It catalyses the reaction O-phospho-L-tyrosyl-[protein] + H2O = L-tyrosyl-[protein] + phosphate. In terms of biological role, a non-specific tyrosine phosphatase that dephosphorylates a diverse number of substrates under acidic conditions (pH 4-6) including alkyl, aryl, and acyl orthophosphate monoesters and phosphorylated proteins. Has lipid phosphatase activity and inactivates lysophosphatidic acid in seminal plasma. In addition to its tyrosine phosphatase activity, also has ecto-5'-nucleotidase activity in dorsal root ganglion (DRG) neurons. Generates adenosine from AMP. This extracellular adenosine leads to a decrease in chronic pain by activating A1R in nociceptive neurons. The chain is Prostatic acid phosphatase (Acp3) from Mus musculus (Mouse).